The sequence spans 246 residues: Pyridoxine 5'-phosphate synthase (246 aa).

3-amino-2-oxopropyl phosphate is bound at residue N12. 14–15 is a binding site for 1-deoxy-D-xylulose 5-phosphate; it reads DH. A 3-amino-2-oxopropyl phosphate-binding site is contributed by R23. Residue H48 is the Proton acceptor of the active site. R50 and H55 together coordinate 1-deoxy-D-xylulose 5-phosphate. E75 serves as the catalytic Proton acceptor. T105 contributes to the 1-deoxy-D-xylulose 5-phosphate binding site. H196 (proton donor) is an active-site residue. 3-amino-2-oxopropyl phosphate is bound by residues G197 and 218-219; that span reads GH.

It belongs to the PNP synthase family. As to quaternary structure, homooctamer; tetramer of dimers.

The protein localises to the cytoplasm. The catalysed reaction is 3-amino-2-oxopropyl phosphate + 1-deoxy-D-xylulose 5-phosphate = pyridoxine 5'-phosphate + phosphate + 2 H2O + H(+). It functions in the pathway cofactor biosynthesis; pyridoxine 5'-phosphate biosynthesis; pyridoxine 5'-phosphate from D-erythrose 4-phosphate: step 5/5. Catalyzes the complicated ring closure reaction between the two acyclic compounds 1-deoxy-D-xylulose-5-phosphate (DXP) and 3-amino-2-oxopropyl phosphate (1-amino-acetone-3-phosphate or AAP) to form pyridoxine 5'-phosphate (PNP) and inorganic phosphate. The sequence is that of Pyridoxine 5'-phosphate synthase from Thiobacillus denitrificans (strain ATCC 25259 / T1).